The chain runs to 451 residues: MGRRYFGTDGIRGTVGEAPITPDFVLRLGYAAGKVLAGSADVAAGSRPTVLIGKDTRVSGYMLEAALEAGFSAAGVDVMLAGPMPTPGVAYLTRALRLSAGVVISASHNPYHDNGIKFFSADGNKLPDDTEAAIEAWLDKPLECAPSDGLGKARRLDDAAGRYIEFCKSTFPAAFDLRGLKLVIDCAHGAAYQIAPHVFHELGADVIPIGVAPNGFNINDGVGATAPDALVRAVRANHADLGIALDGDADRLQVVDATGRLYNGDELLYVLVKDRIATDGKVDGAVGTLMTNLAVEVALQREGVKFVRAAVGDRYVLEQLREHGWQLGAEGSGHILSLDRHSTGDGIVSALLVLAALKRSGRTLAQVLDGVTLFPQKLINVRMKPGADWKGSASIRAAIDAAEAALAGSGRVLIRASGTEPVLRVMVEAQQAADAVRHAETIADAVRAATT.

The active-site Phosphoserine intermediate is Ser107. The Mg(2+) site is built by Ser107, Asp246, Asp248, and Asp250. Residue Ser107 is modified to Phosphoserine.

This sequence belongs to the phosphohexose mutase family. Mg(2+) serves as cofactor. Post-translationally, activated by phosphorylation.

It catalyses the reaction alpha-D-glucosamine 1-phosphate = D-glucosamine 6-phosphate. Catalyzes the conversion of glucosamine-6-phosphate to glucosamine-1-phosphate. This chain is Phosphoglucosamine mutase, found in Burkholderia cenocepacia (strain HI2424).